Consider the following 287-residue polypeptide: Bifunctional protein FolD (287 aa).

Residues 165–167 (NRS), serine 190, and isoleucine 233 each bind NADP(+).

It belongs to the tetrahydrofolate dehydrogenase/cyclohydrolase family. In terms of assembly, homodimer.

The catalysed reaction is (6R)-5,10-methylene-5,6,7,8-tetrahydrofolate + NADP(+) = (6R)-5,10-methenyltetrahydrofolate + NADPH. The enzyme catalyses (6R)-5,10-methenyltetrahydrofolate + H2O = (6R)-10-formyltetrahydrofolate + H(+). The protein operates within one-carbon metabolism; tetrahydrofolate interconversion. Its function is as follows. Catalyzes the oxidation of 5,10-methylenetetrahydrofolate to 5,10-methenyltetrahydrofolate and then the hydrolysis of 5,10-methenyltetrahydrofolate to 10-formyltetrahydrofolate. This Nitrosopumilus maritimus (strain SCM1) protein is Bifunctional protein FolD.